A 399-amino-acid chain; its full sequence is MALEVRRMEGDVEDGELSDSDSDMPGAGSPRERQQKSNDGSNAGRPFQSSISSGVPDVPYRTTKSVDSSDESFSESDDDSSLWKRKRQKCFNFPPAKCEPFPLNQSHAKQTALGGKKVNNIWGMVLQEQNQDAVATELGILGMDGSIDRSRQSETYNYLLAKKLMKEAQQKEAETLDKELDEYMHDDKKTLPAEEENGQGFLKRKRSVKDRLGERQEMKYKGRYEITEEDSEEKVADEIAYRLCEPKKDLIARVVKIIGKRKAIELLMETAEVEQNGGLFIVNGTRRRTPGGVYLNLLKNTPSIKEEQIKEIFYLENQKEYENKKAAKKRRIQVLGKKMKKAIKGLNLQEYDDASRETFASDTNEALASLDDLQDGHHEAKMEHEDIIEIDNAHDLEIF.

Residues 1 to 10 (MALEVRRMEG) are compositionally biased toward basic and acidic residues. Residues 1–83 (MALEVRRMEG…SESDDDSSLW (83 aa)) form a disordered region. Positions 11-22 (DVEDGELSDSDS) are enriched in acidic residues. A compositionally biased stretch (polar residues) spans 37–53 (SNDGSNAGRPFQSSISS). Acidic residues predominate over residues 68-80 (SSDESFSESDDDS).

Belongs to the PHAX family.

Its subcellular location is the nucleus. The protein resides in the cytoplasm. Its function is as follows. Probably involved in protein and RNA export from the nucleus. The polypeptide is Phosphorylated adapter RNA export protein (PHAX) (Gallus gallus (Chicken)).